Here is a 502-residue protein sequence, read N- to C-terminus: Nondiscriminating glutamyl-tRNA synthetase EARS2, mitochondrial (502 aa).

Residues 1–20 (MAGMLREVCGAAASGLRVRF) constitute a mitochondrion transit peptide. 19-21 (RFG) contributes to the L-glutamate binding site. Residues 24–32 (PTGFLHLGG) carry the 'HIGH' region motif. Residue His29 coordinates ATP. L-glutamate contacts are provided by residues Glu55, 207-211 (YHLAN), and Arg225. Residues Glu228 and 263-267 (KLSKR) contribute to the ATP site. The 'KMSKS' region signature appears at 263–267 (KLSKR).

It belongs to the class-I aminoacyl-tRNA synthetase family. Glutamate--tRNA ligase type 1 subfamily.

The protein resides in the mitochondrion matrix. It carries out the reaction tRNA(Glx) + L-glutamate + ATP = L-glutamyl-tRNA(Glx) + AMP + diphosphate. The enzyme catalyses tRNA(Glu) + L-glutamate + ATP = L-glutamyl-tRNA(Glu) + AMP + diphosphate. It catalyses the reaction tRNA(Gln) + L-glutamate + ATP = L-glutamyl-tRNA(Gln) + AMP + diphosphate. Non-discriminating glutamyl-tRNA synthetase that catalyzes aminoacylation of both mitochondrial tRNA(Glu) and tRNA(Gln) and participates in RNA aminoacylation for mitochondrial protein translation. Attachs glutamate to tRNA(Glu) or tRNA(Gln) in a two-step reaction: glutamate is first activated by ATP to form Glu-AMP and then transferred to the acceptor end of tRNA(Glu) or tRNA(Gln). The polypeptide is Nondiscriminating glutamyl-tRNA synthetase EARS2, mitochondrial (Gallus gallus (Chicken)).